The primary structure comprises 493 residues: Probable cytochrome P450 313a2 (493 aa).

Heme is bound at residue Cys-438.

It belongs to the cytochrome P450 family. The cofactor is heme.

It localises to the endoplasmic reticulum membrane. The protein localises to the microsome membrane. May be involved in the metabolism of insect hormones and in the breakdown of synthetic insecticides. The sequence is that of Probable cytochrome P450 313a2 (Cyp313a2) from Drosophila melanogaster (Fruit fly).